The following is a 362-amino-acid chain: Prostaglandin F2-alpha receptor (362 aa).

Topologically, residues 1 to 31 (MSTNSSIQPVSPESELLSNTTCQLEEDLSIS) are extracellular. 2 N-linked (GlcNAc...) asparagine glycosylation sites follow: Asn4 and Asn19. The chain crosses the membrane as a helical span at residues 32–54 (FSIIFMTVGILSNSLAIAILMKA). At 55-69 (YQRFRQKYKSSFLLL) the chain is on the cytoplasmic side. The chain crosses the membrane as a helical span at residues 70–90 (ASALVITDFFGHLINGTIAVF). Over 91–109 (VYASDKDWIYFDKSNILCS) the chain is Extracellular. An intrachain disulfide couples Cys108 to Cys186. Residues 110–131 (IFGICMVFSGLCPLFLGSLMAI) form a helical membrane-spanning segment. Over 132–152 (ERCIGVTKPIFHSTKITTKHV) the chain is Cytoplasmic. The chain crosses the membrane as a helical span at residues 153 to 175 (KMMLSGVCFFAVFVALLPILGHR). The Extracellular segment spans residues 176–198 (DYKIQASRTWCFYKTDEIKDWED). A helical transmembrane segment spans residues 199 to 224 (RFYLLLFAFLGLLALGISFVCNAITG). Topologically, residues 225–250 (ISLLKVKFRSQQHRQGRSHHFEMVIQ) are cytoplasmic. The helical transmembrane segment at 251 to 267 (LLGIMCVSCICWSPFLV) threads the bilayer. The Extracellular segment spans residues 268–285 (TMASIGMNIQDFKDSCER). The chain crosses the membrane as a helical span at residues 286–307 (TLFTLRMATWNQILDPWVYILL). Residues 308–362 (RKAVLRNLYVCTRRCCGVHVISLHVWELSSIKDSLKVAAISDLPVTEKVTQQTST) lie on the Cytoplasmic side of the membrane.

The protein belongs to the G-protein coupled receptor 1 family.

The protein resides in the cell membrane. Receptor for prostaglandin F2-alpha (PGF2-alpha). The activity of this receptor is mediated by G proteins which activate a phosphatidylinositol-calcium second messenger system. Initiates luteolysis in the corpus luteum. This Bos taurus (Bovine) protein is Prostaglandin F2-alpha receptor (PTGFR).